We begin with the raw amino-acid sequence, 1068 residues long: MRGLTPKNGVHIETGPDTESSADSSNFSTGFSGKIRKPRSKVSKACDNCRKRKIKCNGKFPCASCEIYSCECTFSTRQGGARIKNLHKTSLEGTTVQVKEETDSSSTSFSNPQRCTDGPCAVEQPTKFFENFKLGGRSSGDNSGSDGKNDDDVNRNGFYEDDSESQATLTSLQTTLKNLKEMAHLGTHVTSAIESIELQISDLLKRWEPKVRTKELATTKFYPNKSIETQLMKNKYCDVVHLTRYAAWSNNKKDQDTSSQPLIDEIFGLYSPFQFLSLQGIGKCFQNYRSKSKCEIFPRTAKETIYIMLRFFDVCFHHINQGCVSIANPLENYLQKMNLLPSTPSSISSAGSPNTAHTKSHVALVINHLPQPFVRNITGISNSELLSEMNNDISMFGILLKMLDMHKNSYQNFLMEITSNPSVAKNTQSIDVLQEFIHYCQAGEALIALCYSYYNSTLYNYVDFTCDITHLEQLLYFLDLLFWLSEIYGFEKVLNVAVHFVSRVGLSRWEFYVGLDENFAERRRNLWWKAFYFEKTLASKLGYPSNIDDSKINCLLPKNFRDVGFLDNRDFIENVHLVRRSEAFDNMCISDLKYYGELAVLQIVSHFSSSVLFNEKFTSIRNTSKPSVVREKLLFEVLEIFNETEMKYDAIKEQTGKLFDIAFSKDSTELKVSREDKIMASKFVLFYEHHFCRMVNESDNIVARLCVHRRPSILIENLKIYLHKIYKSWTDMNKILLDFDNDYSVYRSFAHYSISCIILVSQAFSVAEFIKVNDVVNMIRVFKRFLDIKIFSENETNEHVFNSQSFKDYTRAFSFLTIVTRIMLLAYGESSSTNLDVISKYIDENAPDLKGIIELVLDTNSCAYRFLLEPVQKSGFHLTVSQMLKNRKFQEPLMSNEDNKQMKHNSGKNLNPDLPSLKTGTSCLLNGIESPQLPFNGRSAPSPVRNNSLPEFAQLPSFRSLSVSDMINPDYAQPTNGQNNTQVQSNKPINAQQQIPTSVQVPFMNTNEINNNNNNNNNNKNNINNINNNNSNNFSATSFNLGTLDEFVNNGDLEDLYSILWSDVYPDS.

The interval 1–38 (MRGLTPKNGVHIETGPDTESSADSSNFSTGFSGKIRKP) is disordered. Polar residues predominate over residues 17 to 31 (DTESSADSSNFSTGF). Ser-21 is subject to Phosphoserine. The segment at residues 46-72 (CDNCRKRKIKCNGKFPCASCEIYSCEC) is a DNA-binding region (zn(2)-C6 fungal-type). Disordered regions lie at residues 95–120 (TVQVKEETDSSSTSFSNPQRCTDGPC) and 133–166 (KLGGRSSGDNSGSDGKNDDDVNRNGFYEDDSESQ). Polar residues predominate over residues 104–114 (SSSTSFSNPQR). Residues 135–146 (GGRSSGDNSGSD) show a composition bias toward low complexity. Phosphoserine is present on residues Ser-930, Ser-942, and Ser-948. The disordered stretch occupies residues 1005 to 1029 (NTNEINNNNNNNNNNKNNINNINNN). The 9aaTAD signature appears at 1054-1062 (EDLYSILWS).

Its subcellular location is the nucleus. Its function is as follows. Positive regulator of proteins involved in permeability. PDR1 and PDR3 jointly control the transcription level of both SNQ2 and PDR5. This chain is Transcription factor PDR1 (PDR1), found in Saccharomyces cerevisiae (strain ATCC 204508 / S288c) (Baker's yeast).